The primary structure comprises 152 residues: Superoxide dismutase [Cu-Zn] 2 (152 aa).

Residues His45, His47, and His62 each contribute to the Cu cation site. A disulfide bridge connects residues Cys56 and Cys145. 4 residues coordinate Zn(2+): His62, His70, His79, and Asp82. Residue His119 coordinates Cu cation.

Belongs to the Cu-Zn superoxide dismutase family. In terms of assembly, homodimer. The cofactor is Cu cation. It depends on Zn(2+) as a cofactor.

It localises to the cytoplasm. The enzyme catalyses 2 superoxide + 2 H(+) = H2O2 + O2. Destroys radicals which are normally produced within the cells and which are toxic to biological systems. The sequence is that of Superoxide dismutase [Cu-Zn] 2 (SODCC2) from Oryza sativa subsp. japonica (Rice).